Consider the following 196-residue polypeptide: MAIDVKAIEEHIRGILIALGDNPEREGLKDTPKRVAKMYEEVFKGMCYSNDEIAEMFNITFEDDLCINDNENDMVFMKEIEIFSHCEHHLALMYNMKVAIAYIPKGKIIGLSKMARIADMVGRRLQLQERIGSDIAEILQKITGSEDVAVIIEGEHGCMTTRGIKKSGTKTITTTLRGKFNTDPIISNKLMMLYTK.

Residues C86, H89, and C158 each contribute to the Zn(2+) site.

This sequence belongs to the GTP cyclohydrolase I family. As to quaternary structure, homomer.

It catalyses the reaction GTP + H2O = 7,8-dihydroneopterin 3'-triphosphate + formate + H(+). It participates in cofactor biosynthesis; 7,8-dihydroneopterin triphosphate biosynthesis; 7,8-dihydroneopterin triphosphate from GTP: step 1/1. In Clostridium botulinum (strain Loch Maree / Type A3), this protein is GTP cyclohydrolase 1.